We begin with the raw amino-acid sequence, 1484 residues long: Glutamate receptor ionotropic, NMDA 2B (1484 aa).

Residues 1–26 form the signal peptide; that stretch reads MKPRAECCSPKFWLVLAVLAVSGSRA. Topologically, residues 27–555 are extracellular; that stretch reads RSQKSPPSIG…SPSAFLEPFS (529 aa). Asn74 carries N-linked (GlcNAc...) asparagine glycosylation. The cysteines at positions 86 and 321 are disulfide-linked. Residues His127 and Glu284 each contribute to the Zn(2+) site. 4 N-linked (GlcNAc...) asparagine glycosylation sites follow: Asn341, Asn348, Asn444, and Asn491. 2 cysteine pairs are disulfide-bonded: Cys429–Cys456 and Cys436–Cys457. 2 residues coordinate L-glutamate: Thr514 and Arg519. Asn542 is a glycosylation site (N-linked (GlcNAc...) asparagine). A helical membrane pass occupies residues 556–576; sequence ADVWVMMFVMLLIVSAVAVFV. The Cytoplasmic portion of the chain corresponds to 577–601; the sequence is FEYFSPVGYNRCLADGREPGGPSFT. Positions 602–613 form an intramembrane region, discontinuously helical; the sequence is IGKAIWLLWGLV. The interval 604–623 is pore-forming; sequence KAIWLLWGLVFNNSVPVQNP. Topologically, residues 614 to 627 are cytoplasmic; the sequence is FNNSVPVQNPKGTT. The helical transmembrane segment at 628 to 647 threads the bilayer; it reads SKIMVSVWAFFAVIFLASYT. The Extracellular segment spans residues 648–819; it reads ANLAAFMIQE…SSQLDIDNMA (172 aa). Residue Asn688 is glycosylated (N-linked (GlcNAc...) asparagine). Residues 690 to 691 and Asp732 contribute to the L-glutamate site; that span reads ST. The helical transmembrane segment at 820-835 threads the bilayer; sequence GVFYMLGAAMALSLIT. Residues 836–1484 are Cytoplasmic-facing; the sequence is FICEHLFYWQ…EKLSSIESDV (649 aa). Ser882, Ser886, Ser917, and Ser920 each carry phosphoserine. Tyr962 and Tyr1039 each carry phosphotyrosine. Ser1058, Ser1061, and Ser1064 each carry phosphoserine. The segment at 1074-1097 is disordered; sequence EGNAAKRRKQQYKDSLKKRPASAK. 2 positions are modified to phosphotyrosine: Tyr1109 and Tyr1133. Ser1143 carries the post-translational modification Phosphoserine. Tyr1155 carries the post-translational modification Phosphotyrosine. A disordered region spans residues 1161-1194; it reads DFKRDSVSGGGPCTNRSHIKHGTGDKHGVVSGVP. Phosphoserine is present on residues Ser1255 and Ser1259. The disordered stretch occupies residues 1271 to 1301; it reads AVTSNASTTKYPQSPTNSKAQKKNRNKLRRQ. Over residues 1272–1289 the composition is skewed to polar residues; sequence VTSNASTTKYPQSPTNSK. The segment covering 1290 to 1301 has biased composition (basic residues); sequence AQKKNRNKLRRQ. The segment at 1292 to 1304 is interaction with DAPK1; sequence KKNRNKLRRQHSY. The residue at position 1303 (Ser1303) is a Phosphoserine; by DAPK1. Residue Tyr1474 is modified to Phosphotyrosine. Residues 1482 to 1484 carry the PDZ-binding motif; sequence SDV.

Belongs to the glutamate-gated ion channel (TC 1.A.10.1) family. NR2B/GRIN2B subfamily. In terms of assembly, heterotetramer. Forms heterotetrameric channels composed of two GluN1/zeta subunits (GRIN1), and two identical GluN2/epsilon subunits (GRIN2A, GRIN2B, GRIN2C or GRIN2D) or GluN3 subunits (GRIN3A or GRIN3B) (in vitro). Can also form heterotetrameric channels that contain at least two GluN1 subunits and at least two different GluN2 subunits (or a combination of one GluN2 and one GluN3 subunits) (in vitro). In vivo, the subunit composition may depend on the expression levels of the different subunits. Found in a complex with GRIN1 and GRIN3B. Found in a complex with GRIN1, GRIN3A and PPP2CB. Interacts with PDZ domains of PATJ, DLG3 and DLG4. Interacts with HIP1 and NETO1. Interacts with MAGI3. Interacts with DAPK1. Found in a complex with GRIN1 and PRR7. Interacts with PRR7. Interacts with CAMK2A. Interacts with ARC; preventing ARC oligomerization. Interacts with TMEM25. Interacts (via the extreme C-terminus) with FRMPD2 (via the second PDZ domain); the interaction is direct and is likely to promote NMDAR-mediated neural signal transmission. Interacts with FAM81A; the interaction facilitates condensate formation via liquid-liquid phase separation. In terms of processing, phosphorylated on tyrosine residues. Phosphorylation at Ser-1303 by DAPK1 enhances synaptic NMDA receptor channel activity. Primarily found in the fronto-parieto-temporal cortex and hippocampus pyramidal cells, lower expression in the basal ganglia.

The protein localises to the cell membrane. It is found in the postsynaptic cell membrane. The protein resides in the cell projection. Its subcellular location is the dendrite. It localises to the late endosome. The protein localises to the lysosome. It is found in the cytoplasm. The protein resides in the cytoskeleton. It carries out the reaction Ca(2+)(in) = Ca(2+)(out). The catalysed reaction is Na(+)(in) = Na(+)(out). It catalyses the reaction K(+)(in) = K(+)(out). Functionally, component of N-methyl-D-aspartate (NMDA) receptors (NMDARs) that function as heterotetrameric, ligand-gated cation channels with high calcium permeability and voltage-dependent block by Mg(2+). Participates in synaptic plasticity for learning and memory formation by contributing to the long-term depression (LTD) of hippocampus membrane currents. Channel activation requires binding of the neurotransmitter L-glutamate to the GluN2 subunit, glycine or D-serine binding to the GluN1 subunit, plus membrane depolarization to eliminate channel inhibition by Mg(2+). NMDARs mediate simultaneously the potasium efflux and the influx of calcium and sodium. Each GluN2 subunit confers differential attributes to channel properties, including activation, deactivation and desensitization kinetics, pH sensitivity, Ca2(+) permeability, and binding to allosteric modulators. In concert with DAPK1 at extrasynaptic sites, acts as a central mediator for stroke damage. Its phosphorylation at Ser-1303 by DAPK1 enhances synaptic NMDA receptor channel activity inducing injurious Ca2+ influx through them, resulting in an irreversible neuronal death. This Homo sapiens (Human) protein is Glutamate receptor ionotropic, NMDA 2B.